A 147-amino-acid chain; its full sequence is D-aminoacyl-tRNA deacylase (147 aa).

The Gly-cisPro motif, important for rejection of L-amino acids signature appears at 136 to 137 (GP).

The protein belongs to the DTD family. Homodimer.

The protein resides in the cytoplasm. It carries out the reaction glycyl-tRNA(Ala) + H2O = tRNA(Ala) + glycine + H(+). It catalyses the reaction a D-aminoacyl-tRNA + H2O = a tRNA + a D-alpha-amino acid + H(+). Functionally, an aminoacyl-tRNA editing enzyme that deacylates mischarged D-aminoacyl-tRNAs. Also deacylates mischarged glycyl-tRNA(Ala), protecting cells against glycine mischarging by AlaRS. Acts via tRNA-based rather than protein-based catalysis; rejects L-amino acids rather than detecting D-amino acids in the active site. By recycling D-aminoacyl-tRNA to D-amino acids and free tRNA molecules, this enzyme counteracts the toxicity associated with the formation of D-aminoacyl-tRNA entities in vivo and helps enforce protein L-homochirality. The polypeptide is D-aminoacyl-tRNA deacylase (Streptococcus agalactiae serotype Ia (strain ATCC 27591 / A909 / CDC SS700)).